Consider the following 644-residue polypeptide: Acetolactate synthase 1, chloroplastic (644 aa).

The transit peptide at 1 to 43 directs the protein to the chloroplast; that stretch reads MATTAAAAAAALSAAATAKTGRKNHQRHHVLPARGRVGAAAVR. The interval 47-67 is disordered; it reads VSPVTPPSPAPPATPLRPWGP. Residues 50 to 61 are compositionally biased toward pro residues; it reads VTPPSPAPPATP. Glu-118 lines the thiamine diphosphate pocket. The cysteines at positions 138 and 284 are disulfide-linked. FAD contacts are provided by residues Arg-220, 326-347, and 369-388; these read HGTVYANYAVDKADLLLAFGVR and DIDPAEIGKNKQPHVSICAD. Positions 461–541 are thiamine pyrophosphate binding; that stretch reads QHQMWAAQYY…VKVMVLNNQH (81 aa). Mg(2+) contacts are provided by Asp-512 and Asn-539.

Belongs to the TPP enzyme family. Mg(2+) is required as a cofactor. Thiamine diphosphate serves as cofactor.

It localises to the plastid. Its subcellular location is the chloroplast. It catalyses the reaction 2 pyruvate + H(+) = (2S)-2-acetolactate + CO2. It functions in the pathway amino-acid biosynthesis; L-isoleucine biosynthesis; L-isoleucine from 2-oxobutanoate: step 1/4. It participates in amino-acid biosynthesis; L-valine biosynthesis; L-valine from pyruvate: step 1/4. This chain is Acetolactate synthase 1, chloroplastic (ALS1), found in Oryza sativa subsp. japonica (Rice).